The following is a 489-amino-acid chain: Adenylosuccinate synthetase 2, chloroplastic (489 aa).

Residues 1–45 (MPFSPPCLDPAAAAAASLSFLPAAAARPPAPCAVAPRSRRALRVA) constitute a chloroplast transit peptide. GTP contacts are provided by residues 76-82 (GDEGKGK) and 104-106 (GHT). Residue aspartate 77 is the Proton acceptor of the active site. The Mg(2+) site is built by aspartate 77 and glycine 104. Residues 77 to 80 (DEGK), 102 to 105 (NAGH), threonine 194, arginine 208, glutamine 288, threonine 303, and arginine 367 contribute to the IMP site. Histidine 105 (proton donor) is an active-site residue. Position 363-369 (363-369 (TTTGRPR)) interacts with substrate. Residues arginine 369, 395-397 (KLD), and 478-480 (GVG) contribute to the GTP site.

It belongs to the adenylosuccinate synthetase family. Homodimer. The cofactor is Mg(2+).

Its subcellular location is the plastid. It localises to the chloroplast. It carries out the reaction IMP + L-aspartate + GTP = N(6)-(1,2-dicarboxyethyl)-AMP + GDP + phosphate + 2 H(+). Its pathway is purine metabolism; AMP biosynthesis via de novo pathway; AMP from IMP: step 1/2. Plays an important role in the de novo pathway and in the salvage pathway of purine nucleotide biosynthesis. Catalyzes the first committed step in the biosynthesis of AMP from IMP. This is Adenylosuccinate synthetase 2, chloroplastic from Oryza sativa subsp. japonica (Rice).